A 100-amino-acid chain; its full sequence is Putative pterin-4-alpha-carbinolamine dehydratase (100 aa).

It belongs to the pterin-4-alpha-carbinolamine dehydratase family.

The enzyme catalyses (4aS,6R)-4a-hydroxy-L-erythro-5,6,7,8-tetrahydrobiopterin = (6R)-L-erythro-6,7-dihydrobiopterin + H2O. This Alteromonas mediterranea (strain DSM 17117 / CIP 110805 / LMG 28347 / Deep ecotype) protein is Putative pterin-4-alpha-carbinolamine dehydratase.